The sequence spans 181 residues: Organelle RRM domain-containing protein 6, chloroplastic (181 aa).

The N-terminal 44 residues, 1 to 44 (MAISLGRVVVPSCTISGDRLFIPNFSAICSVSCGRINVGTGVIS), are a transit peptide targeting the chloroplast. Residues 77–155 (TKLYVSGLSF…RVIFVEEAKT (79 aa)) enclose the RRM domain. Residues 155 to 169 (TRSDMSRAKPRRDFP) are compositionally biased toward basic and acidic residues. Residues 155–181 (TRSDMSRAKPRRDFPKPQSKPRTFRTW) form a disordered region.

In terms of assembly, interacts with MORF8/RIP1, MORF2/RIP2, MORF9/RIP9 and VAR3/OZ1.

Its subcellular location is the plastid. The protein localises to the chloroplast. Functionally, involved in C-to-U editing of chloroplastic RNA. Required for the photosynthetic subunit psbF transcript editing in chloroplast. The sequence is that of Organelle RRM domain-containing protein 6, chloroplastic from Arabidopsis thaliana (Mouse-ear cress).